The sequence spans 340 residues: tRNA N6-adenosine threonylcarbamoyltransferase (340 aa).

Fe cation contacts are provided by H111 and H115. Substrate is bound by residues 134 to 138 (LVSGG), D167, G180, and N276. A Fe cation-binding site is contributed by D304.

It belongs to the KAE1 / TsaD family. Requires Fe(2+) as cofactor.

The protein localises to the cytoplasm. It catalyses the reaction L-threonylcarbamoyladenylate + adenosine(37) in tRNA = N(6)-L-threonylcarbamoyladenosine(37) in tRNA + AMP + H(+). Its function is as follows. Required for the formation of a threonylcarbamoyl group on adenosine at position 37 (t(6)A37) in tRNAs that read codons beginning with adenine. Is involved in the transfer of the threonylcarbamoyl moiety of threonylcarbamoyl-AMP (TC-AMP) to the N6 group of A37, together with TsaE and TsaB. TsaD likely plays a direct catalytic role in this reaction. This Helicobacter pylori (strain G27) protein is tRNA N6-adenosine threonylcarbamoyltransferase.